We begin with the raw amino-acid sequence, 674 residues long: Penicillin-binding protein activator LpoA (674 aa).

The N-terminal stretch at 1 to 31 is a signal peptide; that stretch reads MLSSTFVRTKAGRSKPVRLTAVIAAALFLAG. The N-palmitoyl cysteine moiety is linked to residue C32. C32 carries S-diacylglycerol cysteine lipidation. Positions 291 to 349 are disordered; that stretch reads GVTPSTPVQQQQPASVPEQAAQPASTDPNANGAVSTSAPDAAPVTAAQPSAPSTAPITP. A compositionally biased stretch (low complexity) spans 292-315; it reads VTPSTPVQQQQPASVPEQAAQPAS. Residues 316-328 show a composition bias toward polar residues; sequence TDPNANGAVSTSA. Residues 331 to 349 show a composition bias toward low complexity; sequence AAPVTAAQPSAPSTAPITP.

It belongs to the LpoA family. In terms of assembly, interacts with PBP1a.

Its subcellular location is the cell outer membrane. Its function is as follows. Regulator of peptidoglycan synthesis that is essential for the function of penicillin-binding protein 1A (PBP1a). This Serratia proteamaculans (strain 568) protein is Penicillin-binding protein activator LpoA.